Reading from the N-terminus, the 425-residue chain is 2-oxoglutarate and iron-dependent oxygenase JMJD4 (425 aa).

The region spanning 141–300 is the JmjC domain; it reads SRAFPEQDVY…IMWCFLQDEL (160 aa). His-188, Asp-190, and His-268 together coordinate Fe cation.

Belongs to the JMJD6 family. The cofactor is Fe(2+).

It is found in the cytoplasm. It carries out the reaction L-lysyl-[protein] + 2-oxoglutarate + O2 = 4-hydroxy-L-lysyl-[protein] + succinate + CO2. In terms of biological role, catalyzes the 2-oxoglutarate and iron-dependent C4-lysyl hydroxylation of ETF1 at 'Lys-63' thereby promoting the translational termination efficiency of ETF1. The polypeptide is 2-oxoglutarate and iron-dependent oxygenase JMJD4 (JMJD4) (Gallus gallus (Chicken)).